The sequence spans 702 residues: MADS-box MEF2 type transcription factor MIG1 (702 aa).

Positions M1 to D61 constitute an MADS-box domain. Disordered stretches follow at residues G73–T608 and P658–S702. Positions G86–D96 are enriched in acidic residues. Positions A132 to P144 are enriched in pro residues. The segment covering H145 to P155 has biased composition (low complexity). Residues G180 to M195 show a composition bias toward polar residues. Residues T201–P241 are compositionally biased toward pro residues. Low complexity-rich tracts occupy residues P273–P284, E326–E343, and E350–P371. The span at V456–E465 shows a compositional bias: polar residues. Composition is skewed to low complexity over residues R487–A512 and D530–S553. The segment covering Q554–M567 has biased composition (polar residues). A compositionally biased stretch (pro residues) spans P587–P600. Over residues N693–S702 the composition is skewed to basic and acidic residues.

It belongs to the MEF2 family. As to quaternary structure, interacts with MAPK MPS1.

It is found in the nucleus. In terms of biological role, transcription factor acting downstream of the MPS1 MAP kinase (MAPK) cascade during conidiation and plant infection. Required for overcoming plant defense responses and the differentiation of secondary infectious hyphae in live plant cells. This is MADS-box MEF2 type transcription factor MIG1 from Pyricularia oryzae (strain 70-15 / ATCC MYA-4617 / FGSC 8958) (Rice blast fungus).